We begin with the raw amino-acid sequence, 170 residues long: uncharacterized protein (170 aa).

This is an uncharacterized protein from Bacillus subtilis (strain 168).